The sequence spans 147 residues: Large ribosomal subunit protein uL13 (147 aa).

This sequence belongs to the universal ribosomal protein uL13 family. Part of the 50S ribosomal subunit.

Functionally, this protein is one of the early assembly proteins of the 50S ribosomal subunit, although it is not seen to bind rRNA by itself. It is important during the early stages of 50S assembly. This chain is Large ribosomal subunit protein uL13, found in Polaromonas naphthalenivorans (strain CJ2).